The primary structure comprises 201 residues: Dephospho-CoA kinase (201 aa).

Residues 6 to 201 (VMGLTGSIGM…RAIREKNPRG (196 aa)) form the DPCK domain. Position 14 to 19 (14 to 19 (GMGKSA)) interacts with ATP.

The protein belongs to the CoaE family.

The protein localises to the cytoplasm. The catalysed reaction is 3'-dephospho-CoA + ATP = ADP + CoA + H(+). It functions in the pathway cofactor biosynthesis; coenzyme A biosynthesis; CoA from (R)-pantothenate: step 5/5. In terms of biological role, catalyzes the phosphorylation of the 3'-hydroxyl group of dephosphocoenzyme A to form coenzyme A. This chain is Dephospho-CoA kinase, found in Novosphingobium aromaticivorans (strain ATCC 700278 / DSM 12444 / CCUG 56034 / CIP 105152 / NBRC 16084 / F199).